A 193-amino-acid chain; its full sequence is Holliday junction branch migration complex subunit RuvA (193 aa).

The domain I stretch occupies residues 1 to 64 (MIGRIAGILL…EDAHLLYGFL (64 aa)). Residues 65–139 (TPQERTTFRE…GKLGADLGAL (75 aa)) form a domain II region. Positions 139 to 143 (LAGAA) are flexible linker. Residues 144–193 (SPSDHAADILNALVALGYSEKEGLAAIKNVPAGTGVSDGIKLALKALSKA) are domain III.

This sequence belongs to the RuvA family. In terms of assembly, homotetramer. Forms an RuvA(8)-RuvB(12)-Holliday junction (HJ) complex. HJ DNA is sandwiched between 2 RuvA tetramers; dsDNA enters through RuvA and exits via RuvB. An RuvB hexamer assembles on each DNA strand where it exits the tetramer. Each RuvB hexamer is contacted by two RuvA subunits (via domain III) on 2 adjacent RuvB subunits; this complex drives branch migration. In the full resolvosome a probable DNA-RuvA(4)-RuvB(12)-RuvC(2) complex forms which resolves the HJ.

Its subcellular location is the cytoplasm. Functionally, the RuvA-RuvB-RuvC complex processes Holliday junction (HJ) DNA during genetic recombination and DNA repair, while the RuvA-RuvB complex plays an important role in the rescue of blocked DNA replication forks via replication fork reversal (RFR). RuvA specifically binds to HJ cruciform DNA, conferring on it an open structure. The RuvB hexamer acts as an ATP-dependent pump, pulling dsDNA into and through the RuvAB complex. HJ branch migration allows RuvC to scan DNA until it finds its consensus sequence, where it cleaves and resolves the cruciform DNA. The chain is Holliday junction branch migration complex subunit RuvA from Burkholderia vietnamiensis (strain G4 / LMG 22486) (Burkholderia cepacia (strain R1808)).